The following is a 534-amino-acid chain: ATP synthase subunit beta 2 (534 aa).

185–192 lines the ATP pocket; that stretch reads GGAGVGKT. A compositionally biased stretch (basic and acidic residues) spans 494 to 505; that stretch reads AAAREADARREA. Residues 494-534 are disordered; sequence AAAREADARREAAAAASGAGPGTTSDPASGSAEPQGARHGR.

Belongs to the ATPase alpha/beta chains family. In terms of assembly, F-type ATPases have 2 components, CF(1) - the catalytic core - and CF(0) - the membrane proton channel. CF(1) has five subunits: alpha(3), beta(3), gamma(1), delta(1), epsilon(1). CF(0) has three main subunits: a(1), b(2) and c(9-12). The alpha and beta chains form an alternating ring which encloses part of the gamma chain. CF(1) is attached to CF(0) by a central stalk formed by the gamma and epsilon chains, while a peripheral stalk is formed by the delta and b chains.

It localises to the cell inner membrane. The catalysed reaction is ATP + H2O + 4 H(+)(in) = ADP + phosphate + 5 H(+)(out). Its function is as follows. Produces ATP from ADP in the presence of a proton gradient across the membrane. The catalytic sites are hosted primarily by the beta subunits. This Burkholderia mallei (strain NCTC 10247) protein is ATP synthase subunit beta 2.